The sequence spans 184 residues: Probable cobalt-precorrin-6B C(15)-methyltransferase (decarboxylating) (184 aa).

Residues threonine 12, 36–40 (GCGTG), aspartate 59, and alanine 87 each bind S-adenosyl-L-methionine.

This sequence belongs to the methyltransferase superfamily. Archaeal-type CbiT family.

The catalysed reaction is Co-precorrin-6B + S-adenosyl-L-methionine = Co-precorrin-7 + S-adenosyl-L-homocysteine + CO2. The protein operates within cofactor biosynthesis; adenosylcobalamin biosynthesis; cob(II)yrinate a,c-diamide from sirohydrochlorin (anaerobic route): step 8/10. In terms of biological role, catalyzes the methylation of C-15 in cobalt-precorrin-6B followed by the decarboxylation of C-12 to form cobalt-precorrin-7. The chain is Probable cobalt-precorrin-6B C(15)-methyltransferase (decarboxylating) from Methanosarcina acetivorans (strain ATCC 35395 / DSM 2834 / JCM 12185 / C2A).